The sequence spans 29 residues: Photosystem I reaction center subunit XII (29 aa).

A helical membrane pass occupies residues 7–26 (IFVALILALFSFVLAIRLGT).

This sequence belongs to the PsaM family.

The protein resides in the plastid. It is found in the chloroplast thylakoid membrane. The protein is Photosystem I reaction center subunit XII of Guillardia theta (Cryptophyte).